The chain runs to 211 residues: Protein-L-isoaspartate O-methyltransferase (211 aa).

Ser-60 is an active-site residue.

Belongs to the methyltransferase superfamily. L-isoaspartyl/D-aspartyl protein methyltransferase family.

It is found in the cytoplasm. The enzyme catalyses [protein]-L-isoaspartate + S-adenosyl-L-methionine = [protein]-L-isoaspartate alpha-methyl ester + S-adenosyl-L-homocysteine. Catalyzes the methyl esterification of L-isoaspartyl residues in peptides and proteins that result from spontaneous decomposition of normal L-aspartyl and L-asparaginyl residues. It plays a role in the repair and/or degradation of damaged proteins. This is Protein-L-isoaspartate O-methyltransferase from Pseudomonas fluorescens (strain SBW25).